The primary structure comprises 89 residues: Small ribosomal subunit protein uS15 (89 aa).

It belongs to the universal ribosomal protein uS15 family. As to quaternary structure, part of the 30S ribosomal subunit. Forms a bridge to the 50S subunit in the 70S ribosome, contacting the 23S rRNA.

One of the primary rRNA binding proteins, it binds directly to 16S rRNA where it helps nucleate assembly of the platform of the 30S subunit by binding and bridging several RNA helices of the 16S rRNA. Functionally, forms an intersubunit bridge (bridge B4) with the 23S rRNA of the 50S subunit in the ribosome. The sequence is that of Small ribosomal subunit protein uS15 from Salmonella schwarzengrund (strain CVM19633).